Here is a 75-residue protein sequence, read N- to C-terminus: U6-lycotoxin-Ls1d (75 aa).

The signal sequence occupies residues 1 to 21; it reads MKLLFFTALVLVVISLIEVEA. Residues 22-25 constitute a propeptide that is removed on maturation; that stretch reads ENER.

The protein belongs to the neurotoxin 19 (CSTX) family. 06 (U6-Lctx) subfamily. In terms of processing, contains 4 disulfide bonds. In terms of tissue distribution, expressed by the venom gland.

The protein resides in the secreted. This is U6-lycotoxin-Ls1d from Lycosa singoriensis (Wolf spider).